A 283-amino-acid chain; its full sequence is Undecaprenyl-diphosphatase (283 aa).

The next 7 helical transmembrane spans lie at M1 to I21, G40 to Y60, S85 to F105, Y117 to V137, F196 to V216, V232 to L252, and Y258 to G278.

It belongs to the UppP family.

It localises to the cell inner membrane. The enzyme catalyses di-trans,octa-cis-undecaprenyl diphosphate + H2O = di-trans,octa-cis-undecaprenyl phosphate + phosphate + H(+). Catalyzes the dephosphorylation of undecaprenyl diphosphate (UPP). Confers resistance to bacitracin. This chain is Undecaprenyl-diphosphatase, found in Chloroherpeton thalassium (strain ATCC 35110 / GB-78).